Reading from the N-terminus, the 542-residue chain is Protein MGF 505-11L (542 aa).

This sequence belongs to the asfivirus MGF 505 family.

In terms of biological role, plays a role in virus cell tropism, and may be required for efficient virus replication in macrophages. The chain is Protein MGF 505-11L from Ornithodoros (relapsing fever ticks).